A 1265-amino-acid polypeptide reads, in one-letter code: Dynactin subunit 1 (1265 aa).

A CAP-Gly domain is found at glycine 27 to arginine 69. The interval glycine 81–serine 179 is disordered. Residues serine 85, serine 110, serine 114, serine 117, and serine 121 each carry the phosphoserine modification. 2 stretches are compositionally biased toward low complexity: residues arginine 103 to serine 138 and alanine 161 to alanine 177. Residue serine 183 is modified to Phosphoserine. Coiled coils occupy residues asparagine 213–glutamine 570, leucine 812–serine 836, and glutamine 967–threonine 1084. The disordered stretch occupies residues serine 1082–serine 1106. Residue serine 1117 is modified to Phosphoserine. Positions glutamate 1128–glutamate 1160 form a coiled coil.

Belongs to the dynactin 150 kDa subunit family. Monomer and homodimer. Subunit of dynactin, a multiprotein complex part of a tripartite complex with dynein and a adapter, such as BICDL1, BICD2 or HOOK3. The dynactin complex is built around ACTR1A/ACTB filament and consists of an actin-related filament composed of a shoulder domain, a pointed end and a barbed end. Its length is defined by its flexible shoulder domain. The soulder is composed of 2 DCTN1 subunits, 4 DCTN2 and 2 DCTN3. DCTN1/p150(glued) binds directly to microtubules and to cytoplasmic dynein.

The protein localises to the cytoplasm. The protein resides in the cytoskeleton. Part of the dynactin complex that activates the molecular motor dynein for ultra-processive transport along microtubules. Plays a key role in dynein-mediated retrograde transport of vesicles and organelles along microtubules by recruiting and tethering dynein to microtubules. Binds to both dynein and microtubules providing a link between specific cargos, microtubules and dynein. Essential for targeting dynein to microtubule plus ends, recruiting dynein to membranous cargos and enhancing dynein processivity (the ability to move along a microtubule for a long distance without falling off the track). Can also act as a brake to slow the dynein motor during motility along the microtubule. Can regulate microtubule stability by promoting microtubule formation, nucleation and polymerization and by inhibiting microtubule catastrophe in neurons. Inhibits microtubule catastrophe by binding both to microtubules and to tubulin, leading to enhanced microtubule stability along the axon. Plays a role in metaphase spindle orientation. Plays a role in centriole cohesion and subdistal appendage organization and function. Its recruitment to the centriole in a KIF3A-dependent manner is essential for the maintenance of centriole cohesion and the formation of subdistal appendage. Also required for microtubule anchoring at the mother centriole. Plays a role in primary cilia formation. The chain is Dynactin subunit 1 from Drosophila melanogaster (Fruit fly).